A 278-amino-acid chain; its full sequence is Large ribosomal subunit protein uL2 (278 aa).

A disordered region spans residues 222–278 (GVVMNPIDHPHGGGEGRTSGGRHPVTPWGKPTKGKKTRSNKSTDKFILISRHKRKKK).

It belongs to the universal ribosomal protein uL2 family. In terms of assembly, part of the 50S ribosomal subunit. Forms a bridge to the 30S subunit in the 70S ribosome.

One of the primary rRNA binding proteins. Required for association of the 30S and 50S subunits to form the 70S ribosome, for tRNA binding and peptide bond formation. It has been suggested to have peptidyltransferase activity; this is somewhat controversial. Makes several contacts with the 16S rRNA in the 70S ribosome. This Rhodopseudomonas palustris (strain BisB5) protein is Large ribosomal subunit protein uL2.